A 250-amino-acid chain; its full sequence is Global transcriptional regulator CodY (250 aa).

The tract at residues 1–146 (MTLLEKTRKL…GATVVGLEIL (146 aa)) is GAF domain. Residues 194–213 (ASKIADKVGITRSVIVNALR) constitute a DNA-binding region (H-T-H motif).

This sequence belongs to the CodY family.

It localises to the cytoplasm. Functionally, DNA-binding global transcriptional regulator which is involved in the adaptive response to starvation and acts by directly or indirectly controlling the expression of numerous genes in response to nutrient availability. During rapid exponential growth, CodY is highly active and represses genes whose products allow adaptation to nutrient depletion. In Caldanaerobacter subterraneus subsp. tengcongensis (strain DSM 15242 / JCM 11007 / NBRC 100824 / MB4) (Thermoanaerobacter tengcongensis), this protein is Global transcriptional regulator CodY.